We begin with the raw amino-acid sequence, 142 residues long: Phenylalanine ammonia-lyase (142 aa).

(E)-cinnamate is bound by residues K66, E94, and N97.

This sequence belongs to the PAL/histidase family. As to quaternary structure, homotetramer. Contains an active site 4-methylidene-imidazol-5-one (MIO), which is formed autocatalytically by cyclization and dehydration of residues Ala-Ser-Gly.

Its subcellular location is the cytoplasm. It carries out the reaction L-phenylalanine = (E)-cinnamate + NH4(+). It functions in the pathway phenylpropanoid metabolism; trans-cinnamate biosynthesis; trans-cinnamate from L-phenylalanine: step 1/1. Functionally, catalyzes the non-oxidative deamination of L-phenylalanine to form trans-cinnamic acid and a free ammonium ion. Facilitates the commitment step in phenylpropanoid pathways that produce secondary metabolites such as lignins, coumarins and flavonoids. The chain is Phenylalanine ammonia-lyase (palA) from Agaricus bisporus (White button mushroom).